Here is a 57-residue protein sequence, read N- to C-terminus: Large ribosomal subunit protein bL33 (57 aa).

This sequence belongs to the bacterial ribosomal protein bL33 family.

The sequence is that of Large ribosomal subunit protein bL33 from Bifidobacterium longum (strain NCC 2705).